A 366-amino-acid polypeptide reads, in one-letter code: uncharacterized protein (366 aa).

One can recognise a CP-type G domain in the interval 59 to 222 (LNILHGIGET…LYDTPGIINN (164 aa)).

It belongs to the TRAFAC class YlqF/YawG GTPase family.

Functionally, binds GTP and GDP. This is an uncharacterized protein from Bacillus subtilis (strain 168).